The chain runs to 129 residues: Ribosome-binding factor A (129 aa).

It belongs to the RbfA family. Monomer. Binds 30S ribosomal subunits, but not 50S ribosomal subunits or 70S ribosomes.

Its subcellular location is the cytoplasm. One of several proteins that assist in the late maturation steps of the functional core of the 30S ribosomal subunit. Associates with free 30S ribosomal subunits (but not with 30S subunits that are part of 70S ribosomes or polysomes). Required for efficient processing of 16S rRNA. May interact with the 5'-terminal helix region of 16S rRNA. This is Ribosome-binding factor A from Azotobacter vinelandii (strain DJ / ATCC BAA-1303).